Reading from the N-terminus, the 223-residue chain is uncharacterized protein (223 aa).

This is an uncharacterized protein from Treponema pallidum (strain Nichols).